We begin with the raw amino-acid sequence, 190 residues long: Ribose 1,5-bisphosphate phosphokinase PhnN (190 aa).

19 to 26 is a binding site for ATP; that stretch reads GPSGVGKD.

This sequence belongs to the ribose 1,5-bisphosphokinase family.

The catalysed reaction is alpha-D-ribose 1,5-bisphosphate + ATP = 5-phospho-alpha-D-ribose 1-diphosphate + ADP. The protein operates within metabolic intermediate biosynthesis; 5-phospho-alpha-D-ribose 1-diphosphate biosynthesis; 5-phospho-alpha-D-ribose 1-diphosphate from D-ribose 5-phosphate (route II): step 3/3. In terms of biological role, catalyzes the phosphorylation of ribose 1,5-bisphosphate to 5-phospho-D-ribosyl alpha-1-diphosphate (PRPP). The sequence is that of Ribose 1,5-bisphosphate phosphokinase PhnN from Ruegeria sp. (strain TM1040) (Silicibacter sp.).